The chain runs to 126 residues: Protein FMP49, mitochondrial (126 aa).

Its subcellular location is the mitochondrion. The protein is Protein FMP49, mitochondrial of Saccharomyces cerevisiae (strain ATCC 204508 / S288c) (Baker's yeast).